The chain runs to 832 residues: Mechanosensitive cation channel TMEM63B (832 aa).

At 1–40 (MLPFLLATLGTAALNSSNPKDYCYSARIRSTVLQGLPFGG) the chain is on the extracellular side. A helical membrane pass occupies residues 41–65 (VPTVLALDFMCFLALLFLFSILRKV). The S-palmitoyl cysteine moiety is linked to residue cysteine 51. Topologically, residues 66–145 (AWDYGRLALV…KDDEIRDKCG (80 aa)) are cytoplasmic. Residues 86–88 (RER) carry the Mediates endoplasmic reticulum retention motif. Phosphoserine is present on residues serine 111, serine 113, serine 114, and serine 115. Cysteine 126 is lipidated: S-palmitoyl cysteine. A helical membrane pass occupies residues 146-178 (GDAVHYLSFQRHIIGLLVVVGVLSVGIVLPVNF). At 179-202 (SGDLLENNAYSFGRTTIANLKSGN) the chain is on the extracellular side. Residues 203 to 227 (NLLWLHTSFAFLYLLLTVYSMRRHT) form a helical membrane-spanning segment. Over 228-427 (SKMRYKEDDL…IYWEHLSIRG (200 aa)) the chain is Cytoplasmic. Residues 231 to 426 (RYKEDDLVKR…NIYWEHLSIR (196 aa)) form an intracellular linker IL2; confers mechanosensitivity region. Residues cysteine 382 and cysteine 398 are each lipidated (S-palmitoyl cysteine). The helical transmembrane segment at 428–457 (FIWWLRCLVINVVLFILLFFLTTPAIIITT) threads the bilayer. The Extracellular segment spans residues 458 to 472 (MDKFNVTKPVEYLNN). A glycan (N-linked (GlcNAc...) asparagine) is linked at asparagine 462. A helical membrane pass occupies residues 473-502 (PIITQFFPTLLLWCFSALLPTIVYYSAFFE). The Cytoplasmic portion of the chain corresponds to 503-506 (AHWT). A helical transmembrane segment spans residues 507–543 (RSGENRTTMHKCYTFLIFMVLLLPSLGLSSLDLFFRW). Residues 544–566 (LFDKKFLAEAAIRFECVFLPDNG) are Extracellular-facing. A helical transmembrane segment spans residues 567-599 (AFFVNYVIASAFIGNAMDLLRIPGLLMYMIRLC). The tract at residues 567–599 (AFFVNYVIASAFIGNAMDLLRIPGLLMYMIRLC) is gating helix. Residues 600–619 (LARSAAERRNVKRHQAYEFQ) are Cytoplasmic-facing. A helical transmembrane segment spans residues 620–638 (FGAAYAWMMCVFTVVMTYS). Residues 639 to 641 (ITC) are Extracellular-facing. A helical membrane pass occupies residues 642–666 (PIIVPFGLMYMLLKHLVDRYNLYYA). Topologically, residues 667-673 (YLPAKLD) are cytoplasmic. A helical membrane pass occupies residues 674 to 702 (KKIHSGAVNQVVAAPILCLFWLLFFSTMR). Residues 703–707 (TGFLA) are Extracellular-facing. A helical transmembrane segment spans residues 708-728 (PTSMFTFVVLVITIVICLCHV). 2 S-palmitoyl cysteine lipidation sites follow: cysteine 726 and cysteine 729. Residues 729–832 (CFGHFKYLSA…DSLIENEIHQ (104 aa)) lie on the Cytoplasmic side of the membrane. 2 disordered regions span residues 748-767 (TDAV…AVPK) and 776-818 (LQDS…DTDF). Over residues 749-758 (DAVSSRSNGR) the composition is skewed to polar residues. Positions 789–801 (PGSSGDEPPSSSS) are enriched in low complexity.

The protein belongs to the CSC1 (TC 1.A.17) family. As to quaternary structure, monomer. Interacts with SLC19A2; interaction is required for the phospholipid scramblase activity. In terms of processing, palmitoylation is required for localization to the plasma membrane and stability. Expressed in cochlear hair cells (at protein level). Highly expressed in the subfornical organ of the brain. Expressed in small intestine. As to expression, brain-specific.

The protein localises to the cell membrane. Its subcellular location is the endoplasmic reticulum membrane. The protein resides in the lysosome membrane. It localises to the early endosome membrane. It carries out the reaction Ca(2+)(in) = Ca(2+)(out). The enzyme catalyses Mg(2+)(in) = Mg(2+)(out). The catalysed reaction is K(+)(in) = K(+)(out). It catalyses the reaction Na(+)(in) = Na(+)(out). It carries out the reaction Cs(+)(in) = Cs(+)(out). The enzyme catalyses a 1,2-diacyl-sn-glycero-3-phosphocholine(in) = a 1,2-diacyl-sn-glycero-3-phosphocholine(out). The catalysed reaction is a sphingomyelin(in) = a sphingomyelin(out). Its function is as follows. Mechanosensitive cation channel with low conductance and high activation threshold. Osmosensitive cation channel preferentially activated by hypotonic stress. Also acts as a phospholipid scramblase in response to changes in membrane structure: upon changes in membrane curvature and thickness, alters its conformation and translocates phospholipids, such as phosphatidylcholine and sphingomyelin, thereby controlling plasma membrane lipid distribution. Forms a heterodimer with SLC19A2, which mediates phospholipid scramblase activity following Ca(2+) stimulation. Expressed in excitatory neurons of the subfornical organ and functions as a thirst receptor that mediates neuronal response to hyperosmolality to drive thirst and drinking behavior. Facilitates intestinal motility by promoting proliferation of intestinal stem cells. Essential for the baby's first breath and respiration throughout life. Upon lung inflation conducts cation currents in alveolar type 1 and 2 cells triggering lamellar body exocytosis and surfactant secretion into airspace. Acts as an osmosensor in cochlear outer hair cells (OHCs) where it mediates calcium influx and regulatory volume decrease response. Required for the maintenance of OHC morphology, OHC survival and normal hearing. Brain-specific osmosensitive calcium channel isoform. The chain is Mechanosensitive cation channel TMEM63B from Mus musculus (Mouse).